Reading from the N-terminus, the 375-residue chain is Period circadian protein (375 aa).

Disordered regions lie at residues 28-118 (TAPV…AVTP), 140-189 (KHRE…WEGE), and 220-254 (CQASGAGGGGSGSVGGTGNIGSGGSNAQPSTNQYA). The segment covering 69 to 91 (SGNFTTGSNLHMSSVTNTSNAGT) has biased composition (low complexity). Over residues 92-113 (GTSGTGNSGGGGGGGGGGGPGN) the composition is skewed to gly residues. Residues 145–156 (RGRSGEKNKKSA) are compositionally biased toward basic and acidic residues. Positions 224-243 (GAGGGGSGSVGGTGNIGSGG) are enriched in gly residues. Polar residues predominate over residues 245 to 254 (NAQPSTNQYA).

As to quaternary structure, forms a heterodimer with timeless (TIM); the complex then translocates into the nucleus. Post-translationally, phosphorylated with a circadian rhythmicity, probably by the double-time protein (dbt). Phosphorylation could be implicated in the stability of per monomer and in the formation of heterodimer per-tim.

It is found in the nucleus. The protein resides in the cytoplasm. It localises to the perinuclear region. In terms of biological role, essential for biological clock functions. Determines the period length of circadian and ultradian rhythms; an increase in PER dosage leads to shortened circadian rhythms and a decrease leads to lengthened circadian rhythms. Essential for the circadian rhythmicity of locomotor activity, eclosion behavior, and for the rhythmic component of the male courtship song that originates in the thoracic nervous system. The biological cycle depends on the rhythmic formation and nuclear localization of the TIM-PER complex. Light induces the degradation of TIM, which promotes elimination of PER. Nuclear activity of the heterodimer coordinatively regulates PER and TIM transcription through a negative feedback loop. Behaves as a negative element in circadian transcriptional loop. Does not appear to bind DNA, suggesting indirect transcriptional inhibition. The protein is Period circadian protein (per) of Drosophila capricorni (Fruit fly).